Consider the following 227-residue polypeptide: Cytochrome c oxidase subunit 2 (227 aa).

The Mitochondrial intermembrane segment spans residues 1-14 (MAYPFQLGLQDATS). Residues 15-45 (PIMEELLHFHDHTLMIVFLISSLVLYIITLM) traverse the membrane as a helical segment. The Mitochondrial matrix portion of the chain corresponds to 46 to 59 (LTTKLTHTSTMDAQ). Residues 60 to 87 (EVETVWTILPAIILILIALPSLRILYMM) traverse the membrane as a helical segment. Topologically, residues 88–227 (DEINNPSLTV…YFETWSALMV (140 aa)) are mitochondrial intermembrane. Positions 161, 196, 198, 200, 204, and 207 each coordinate Cu cation. E198 is a binding site for Mg(2+). Y218 bears the Phosphotyrosine mark.

This sequence belongs to the cytochrome c oxidase subunit 2 family. As to quaternary structure, component of the cytochrome c oxidase (complex IV, CIV), a multisubunit enzyme composed of 14 subunits. The complex is composed of a catalytic core of 3 subunits MT-CO1, MT-CO2 and MT-CO3, encoded in the mitochondrial DNA, and 11 supernumerary subunits COX4I, COX5A, COX5B, COX6A, COX6B, COX6C, COX7A, COX7B, COX7C, COX8 and NDUFA4, which are encoded in the nuclear genome. The complex exists as a monomer or a dimer and forms supercomplexes (SCs) in the inner mitochondrial membrane with NADH-ubiquinone oxidoreductase (complex I, CI) and ubiquinol-cytochrome c oxidoreductase (cytochrome b-c1 complex, complex III, CIII), resulting in different assemblies (supercomplex SCI(1)III(2)IV(1) and megacomplex MCI(2)III(2)IV(2)). Found in a complex with TMEM177, COA6, COX18, COX20, SCO1 and SCO2. Interacts with TMEM177 in a COX20-dependent manner. Interacts with COX20. Interacts with COX16. Cu cation serves as cofactor.

It localises to the mitochondrion inner membrane. The enzyme catalyses 4 Fe(II)-[cytochrome c] + O2 + 8 H(+)(in) = 4 Fe(III)-[cytochrome c] + 2 H2O + 4 H(+)(out). Its function is as follows. Component of the cytochrome c oxidase, the last enzyme in the mitochondrial electron transport chain which drives oxidative phosphorylation. The respiratory chain contains 3 multisubunit complexes succinate dehydrogenase (complex II, CII), ubiquinol-cytochrome c oxidoreductase (cytochrome b-c1 complex, complex III, CIII) and cytochrome c oxidase (complex IV, CIV), that cooperate to transfer electrons derived from NADH and succinate to molecular oxygen, creating an electrochemical gradient over the inner membrane that drives transmembrane transport and the ATP synthase. Cytochrome c oxidase is the component of the respiratory chain that catalyzes the reduction of oxygen to water. Electrons originating from reduced cytochrome c in the intermembrane space (IMS) are transferred via the dinuclear copper A center (CU(A)) of subunit 2 and heme A of subunit 1 to the active site in subunit 1, a binuclear center (BNC) formed by heme A3 and copper B (CU(B)). The BNC reduces molecular oxygen to 2 water molecules using 4 electrons from cytochrome c in the IMS and 4 protons from the mitochondrial matrix. This Vulpes macrotis (Kit fox) protein is Cytochrome c oxidase subunit 2 (MT-CO2).